We begin with the raw amino-acid sequence, 254 residues long: Trypsin 3A1 (254 aa).

The N-terminal stretch at 1 to 20 (MNQFLFVSFCALLGLSQVSA) is a signal peptide. Residues 21 to 27 (ATLSSGR) constitute a propeptide, activation peptide. Positions 28–253 (IVGGFQIDIA…VRQWIREVSE (226 aa)) constitute a Peptidase S1 domain. A disulfide bridge connects residues C53 and C69. Active-site charge relay system residues include H68 and D113. 2 disulfides stabilise this stretch: C178-C194 and C205-C229. The active-site Charge relay system is S209.

The protein belongs to the peptidase S1 family. In terms of tissue distribution, midgut.

Its subcellular location is the secreted. It is found in the extracellular space. The catalysed reaction is Preferential cleavage: Arg-|-Xaa, Lys-|-Xaa.. Major function may be to aid in digestion of the blood meal. The protein is Trypsin 3A1 of Aedes aegypti (Yellowfever mosquito).